The primary structure comprises 402 residues: Phosphoribulokinase, chloroplastic (402 aa).

The transit peptide at 1 to 51 directs the protein to the chloroplast; it reads MAVCTVYTIPTTTHLGSSFNQNNKQVFFNYKRSSSSNNTLFTTRPSYVITC. Cys-67 and Cys-106 form a disulfide bridge.

This sequence belongs to the phosphoribulokinase family.

It localises to the plastid. Its subcellular location is the chloroplast. The enzyme catalyses D-ribulose 5-phosphate + ATP = D-ribulose 1,5-bisphosphate + ADP + H(+). Its pathway is carbohydrate biosynthesis; Calvin cycle. Its activity is regulated as follows. Light regulated via thioredoxin by reversible oxidation/reduction of sulfhydryl/disulfide groups. This chain is Phosphoribulokinase, chloroplastic, found in Spinacia oleracea (Spinach).